The primary structure comprises 301 residues: 4-hydroxybenzoate octaprenyltransferase (301 aa).

7 helical membrane passes run Ile-34–Leu-54, Leu-57–Ile-77, Leu-108–Leu-128, Trp-163–Leu-183, Asp-222–Leu-242, Ile-248–Ala-268, and Phe-280–Leu-300.

It belongs to the UbiA prenyltransferase family. The cofactor is Mg(2+).

Its subcellular location is the cell inner membrane. It catalyses the reaction all-trans-octaprenyl diphosphate + 4-hydroxybenzoate = 4-hydroxy-3-(all-trans-octaprenyl)benzoate + diphosphate. Its pathway is cofactor biosynthesis; ubiquinone biosynthesis. Functionally, catalyzes the prenylation of para-hydroxybenzoate (PHB) with an all-trans polyprenyl group. Mediates the second step in the final reaction sequence of ubiquinone-8 (UQ-8) biosynthesis, which is the condensation of the polyisoprenoid side chain with PHB, generating the first membrane-bound Q intermediate 3-octaprenyl-4-hydroxybenzoate. This chain is 4-hydroxybenzoate octaprenyltransferase, found in Xanthomonas campestris pv. campestris (strain 8004).